Here is a 146-residue protein sequence, read N- to C-terminus: Putative pre-16S rRNA nuclease (146 aa).

It belongs to the YqgF nuclease family.

The protein localises to the cytoplasm. In terms of biological role, could be a nuclease involved in processing of the 5'-end of pre-16S rRNA. In Paraburkholderia phytofirmans (strain DSM 17436 / LMG 22146 / PsJN) (Burkholderia phytofirmans), this protein is Putative pre-16S rRNA nuclease.